Here is a 380-residue protein sequence, read N- to C-terminus: Chorismate synthase (380 aa).

R49 serves as a coordination point for NADP(+). Residues G288, 303-307, and R330 each bind FMN; that span reads KPPSS.

Belongs to the chorismate synthase family. It depends on FMNH2 as a cofactor.

It catalyses the reaction 5-O-(1-carboxyvinyl)-3-phosphoshikimate = chorismate + phosphate. It functions in the pathway metabolic intermediate biosynthesis; chorismate biosynthesis; chorismate from D-erythrose 4-phosphate and phosphoenolpyruvate: step 7/7. Functionally, catalyzes the anti-1,4-elimination of the C-3 phosphate and the C-6 proR hydrogen from 5-enolpyruvylshikimate-3-phosphate (EPSP) to yield chorismate, which is the branch point compound that serves as the starting substrate for the three terminal pathways of aromatic amino acid biosynthesis. This reaction introduces a second double bond into the aromatic ring system. The polypeptide is Chorismate synthase (Aeropyrum pernix (strain ATCC 700893 / DSM 11879 / JCM 9820 / NBRC 100138 / K1)).